Reading from the N-terminus, the 260-residue chain is Malonyl-[acyl-carrier protein] O-methyltransferase (260 aa).

It belongs to the methyltransferase superfamily.

It catalyses the reaction malonyl-[ACP] + S-adenosyl-L-methionine = malonyl-[ACP] methyl ester + S-adenosyl-L-homocysteine. It participates in cofactor biosynthesis; biotin biosynthesis. Its function is as follows. Converts the free carboxyl group of a malonyl-thioester to its methyl ester by transfer of a methyl group from S-adenosyl-L-methionine (SAM). It allows to synthesize pimeloyl-ACP via the fatty acid synthetic pathway. In Chlorobium phaeovibrioides (strain DSM 265 / 1930) (Prosthecochloris vibrioformis (strain DSM 265)), this protein is Malonyl-[acyl-carrier protein] O-methyltransferase.